Reading from the N-terminus, the 520-residue chain is Polycomb protein PHO (520 aa).

4 consecutive C2H2-type zinc fingers follow at residues 357–381 (IACP…LHTH), 386–408 (HVCA…QLVH), 414–438 (FQCT…VRIH), and 444–468 (FVCP…ILTH). A disordered region spans residues 475–497 (TSISGKSGCSNAESNSQSEDTSA).

As to quaternary structure, component of the Esc/E(z) complex, composed of Esc, E(z), Su(z)12, HDAC1/Rpd3 and Caf1-55. This complex is distinct from the PRC1 complex, which contains many other PcG proteins like Pc, Ph, Psc, Su(z)2. The two complexes however cooperate and interact together during the first 3 hours of development to establish PcG silencing. Component of the chromatin remodeling Ino80 complex. Interacts with Sfmbt to form a pho-repressive complex (PhoRC).

Its subcellular location is the nucleus. Polycomb group (PcG) protein that binds to the 5'-CNGCCATNNNNG-3' sequence found in the regulatory regions of many genes. PcG proteins act by forming multiprotein complexes, which are required to maintain the transcriptionally repressive state of homeotic genes throughout development. PcG proteins are not required to initiate repression, but to maintain it during later stages of development. They probably act via the methylation of histones, rendering chromatin heritably changed in its expressibility. Probably targets the Esc/E(z) complex to DNA. Necessary but not sufficient to recruit a functional PcG repressive complex that represses target genes, suggesting that the recruitment of the distinct PRC1 complex is also required to allow a subsequent repression. In terms of biological role, proposed core component of the chromatin remodeling Ino80 complex which is involved in transcriptional regulation, DNA replication and probably DNA repair. The protein is Polycomb protein PHO (pho) of Drosophila melanogaster (Fruit fly).